The following is a 75-amino-acid chain: Guanine nucleotide-binding protein G(I)/G(S)/G(O) subunit gamma-3 (75 aa).

Thr-5 carries the phosphothreonine modification. The residue at position 9 (Ser-9) is a Phosphoserine. Thr-10 carries the phosphothreonine modification. A Phosphoserine modification is found at Ser-12. Cys-72 is modified (cysteine methyl ester). Cys-72 is lipidated: S-geranylgeranyl cysteine. Residues Ala-73–Leu-75 constitute a propeptide, removed in mature form.

The protein belongs to the G protein gamma family. G proteins are composed of 3 units, alpha, beta and gamma. Forms a complex with GNAO1 and GNB1. Interacts with SCN8A. In terms of tissue distribution, abundantly expressed in brain. Low levels in testis.

The protein resides in the cell membrane. Functionally, guanine nucleotide-binding proteins (G proteins) are involved as a modulator or transducer in various transmembrane signaling systems. The beta and gamma chains are required for the GTPase activity, for replacement of GDP by GTP, and for G protein-effector interaction. This is Guanine nucleotide-binding protein G(I)/G(S)/G(O) subunit gamma-3 (GNG3) from Bos taurus (Bovine).